The chain runs to 273 residues: Shikimate dehydrogenase (NADP(+)) (273 aa).

Residues 18 to 20 (SKS) and T65 each bind shikimate. K69 (proton acceptor) is an active-site residue. Residue E81 coordinates NADP(+). Shikimate contacts are provided by N90 and D105. Residues 130–134 (GAGGA), 154–159 (NRTHSK), and M217 contribute to the NADP(+) site. Shikimate is bound at residue Y219. G240 lines the NADP(+) pocket.

The protein belongs to the shikimate dehydrogenase family. Homodimer.

The enzyme catalyses shikimate + NADP(+) = 3-dehydroshikimate + NADPH + H(+). It functions in the pathway metabolic intermediate biosynthesis; chorismate biosynthesis; chorismate from D-erythrose 4-phosphate and phosphoenolpyruvate: step 4/7. In terms of biological role, involved in the biosynthesis of the chorismate, which leads to the biosynthesis of aromatic amino acids. Catalyzes the reversible NADPH linked reduction of 3-dehydroshikimate (DHSA) to yield shikimate (SA). This is Shikimate dehydrogenase (NADP(+)) from Janthinobacterium sp. (strain Marseille) (Minibacterium massiliensis).